Reading from the N-terminus, the 111-residue chain is MGPSSCLLLILIPLLQLINPGSTQCSLDSVMDKKIKDVLNSLEYSPSPISKKLSCASVKSQGRPSSCPAGMAVTGCACGYGCGSWDVQLETTCHCQCSVVDWTTARCCHLT.

Positions 1–23 (MGPSSCLLLILIPLLQLINPGST) are cleaved as a signal peptide. Disulfide bonds link C55–C108, C67–C107, C76–C93, C78–C95, and C82–C97.

The protein belongs to the resistin/FIZZ family. In terms of assembly, homodimer; disulfide-linked. As to expression, expressed only in the gastrointestinal tract, particularly the colon.

It localises to the secreted. In terms of biological role, probable hormone. The polypeptide is Resistin-like beta (RETNLB) (Homo sapiens (Human)).